Consider the following 75-residue polypeptide: MKLTCVVIVAVLFLTANTFATADDPRNGLENLFLKAHHEMNPEASKLNERCLSGGEVCDFLFPKCCNYCILLFCS.

An N-terminal signal peptide occupies residues 1–22 (MKLTCVVIVAVLFLTANTFATA). Positions 23–49 (DDPRNGLENLFLKAHHEMNPEASKLNE) are excised as a propeptide. 3 disulfide bridges follow: C51–C66, C58–C69, and C65–C74.

In terms of tissue distribution, expressed by the venom duct.

The protein resides in the secreted. This Conus victoriae (Queen Victoria cone) protein is Conotoxin Vc6a.